The primary structure comprises 206 residues: Transmembrane emp24 domain-containing protein bai (206 aa).

An N-terminal signal peptide occupies residues 1–20 (MLKSLLCILLIFGCLCRIHG). Over 21–172 (VMFHLTPNTQ…RDTNEKTNSR (152 aa)) the chain is Lumenal. In terms of domain architecture, GOLD spans 30 to 140 (QKCLKEDIQA…LKPLEVDLKR (111 aa)). Residues 173–193 (VLFFSIFSMCCLLGLATWQVL) traverse the membrane as a helical segment. Residues 194-206 (YLRRYFKAKKLIE) are Cytoplasmic-facing.

This sequence belongs to the EMP24/GP25L family.

The protein localises to the membrane. In terms of biological role, eca and bai are essential, though not redundant, for dorsoventral patterning of the embryo. Specifically required during early embryogenesis for the activity of maternal tkv, while the zygotic tkv is not affected. This is Transmembrane emp24 domain-containing protein bai from Drosophila grimshawi (Hawaiian fruit fly).